The sequence spans 263 residues: UPF0758 protein NGR_c13970 (263 aa).

Residues 141–263 (VLSSWSAVID…HVSMKGLRLF (123 aa)) enclose the MPN domain. Positions 212, 214, and 225 each coordinate Zn(2+). Residues 212-225 (HNHPSGDPTPSRAD) carry the JAMM motif motif.

The protein belongs to the UPF0758 family.

The protein is UPF0758 protein NGR_c13970 of Sinorhizobium fredii (strain NBRC 101917 / NGR234).